The chain runs to 332 residues: tRNA dimethylallyltransferase (332 aa).

14–21 is an ATP binding site; sequence GPTASGKT. 16 to 21 serves as a coordination point for substrate; that stretch reads TASGKT. Residues 39-42 form an interaction with substrate tRNA region; that stretch reads DSMQ. The segment at 313–332 is disordered; it reads KRSSKHDCKPQHPRSSTREL. Residues 317–332 are compositionally biased toward basic and acidic residues; it reads KHDCKPQHPRSSTREL.

The protein belongs to the IPP transferase family. Monomer. Mg(2+) is required as a cofactor.

It carries out the reaction adenosine(37) in tRNA + dimethylallyl diphosphate = N(6)-dimethylallyladenosine(37) in tRNA + diphosphate. Catalyzes the transfer of a dimethylallyl group onto the adenine at position 37 in tRNAs that read codons beginning with uridine, leading to the formation of N6-(dimethylallyl)adenosine (i(6)A). The protein is tRNA dimethylallyltransferase of Staphylococcus haemolyticus (strain JCSC1435).